The sequence spans 185 residues: Elongation factor P (185 aa).

Belongs to the elongation factor P family.

It localises to the cytoplasm. Its pathway is protein biosynthesis; polypeptide chain elongation. Involved in peptide bond synthesis. Stimulates efficient translation and peptide-bond synthesis on native or reconstituted 70S ribosomes in vitro. Probably functions indirectly by altering the affinity of the ribosome for aminoacyl-tRNA, thus increasing their reactivity as acceptors for peptidyl transferase. The sequence is that of Elongation factor P from Petrotoga mobilis (strain DSM 10674 / SJ95).